We begin with the raw amino-acid sequence, 344 residues long: DNA fragmentation factor subunit beta (344 aa).

Residues Gln-7–Gly-83 form the CIDE-N domain.

In terms of assembly, heterodimer of DFFA and DFFB. Interacts with H1-1.

It localises to the cytoplasm. The protein resides in the nucleus. Inhibited by DFFA (DFF45). Its function is as follows. Nuclease that induces DNA fragmentation and chromatin condensation during apoptosis. Degrades naked DNA and induces apoptotic morphology. The polypeptide is DNA fragmentation factor subunit beta (Dffb) (Mus musculus (Mouse)).